The sequence spans 797 residues: Plakophilin-3 (797 aa).

A disordered region spans residues Gln-56–Gly-82. Arg-81 bears the Omega-N-methylarginine mark. A phosphoserine mark is found at Ser-123, Ser-180, and Ser-183. Tyr-195 bears the Phosphotyrosine; by SRC mark. Ser-238 and Ser-240 each carry phosphoserine. The residue at position 250 (Thr-250) is a Phosphothreonine. Arg-261 is modified (omega-N-methylarginine). Residues Ser-283–Leu-288 are required for interaction with SFN. Residues Ser-285, Ser-313, Ser-314, and Ser-331 each carry the phosphoserine modification. The segment at Leu-294–Val-724 is required for interaction with GSK3B. ARM repeat units lie at residues Ser-305–Tyr-348, Ala-351–Tyr-390, Ala-393–Ser-432, Thr-449–Ser-487, Ala-491–Tyr-536, Pro-596–Ala-637, Val-645–Arg-684, and Lys-689–Val-730. Residues Ala-516–Pro-797 form a required for binding to PKP2 mRNA region.

It belongs to the beta-catenin family. Found in a complex composed of CDH1, RAP1A and PKP3; PKP3 acts as a scaffold protein within the complex, the complex is required for CDH1 localization to mature desmosome cell junctions. Interacts with FXR1; the interaction facilitates the binding of PKP3 to PKP2 mRNA. Interacts (via ARM repeats) with GSK3B; the interaction may be involved in PKP3 protein degradation. Interacts with hyperphosphorylated and hypophosphorylated RB1; the interaction inhibits RB1 interaction with and repression of the transcription factor E2F1, potentially via sequestering RB1 to the cytoplasm. Interacts with CDKN1A; the interaction sequesters CDKN1A to the cytoplasm thereby repressing its role as an inhibitor of CDK4- and CDK6-driven RB1 phosphorylation. Interacts (via N-terminus) with SFN; the interaction maintains the cytoplasmic pool of PKP3, facilitates PKP3 exchange at desmosomes and restricts PKP3 localization to existing desmosome cell junctions. Interacts (via N-terminus) with JUP; the interaction is required for PKP3 localization to desmosome cell-cell junctions. Phosphorylated at Ser-285 when localized to the cytoplasm, PKP3 at desmosome cell junctions is not phosphorylated. Phosphorylation at Try-195 by SRC is induced by reactive oxygen species and potentially acts as a release mechanism from desmosome cell-cell junctions. As to expression, expressed in the epidermis of the skin, in squamous non-cornifying epithelial cells in the vagina, single layer epithelia of the duodenum and pancreas acini and non-epithelial dendritic reticulum cells of lymph node follicles (at protein level). In terms of tissue distribution, expressed in the oral cavity mucosa, epidermis and small intestine epithelium (at protein level). Expressed in the oral cavity mucosa and epithelial cells of the crypts and villi in the small intestine (at protein level). Expressed in the epidermis with more abundant expression found in the basal and low spinous cells (at protein level).

It is found in the nucleus. It localises to the cell junction. Its subcellular location is the desmosome. The protein resides in the cytoplasm. The protein localises to the cell membrane. It is found in the adherens junction. Its function is as follows. A component of desmosome cell-cell junctions which are required for positive regulation of cellular adhesion. Required for the localization of DSG2, DSP and PKP2 to mature desmosome junctions. May also play a role in the maintenance of DSG3 protein abundance in keratinocytes. Required for the formation of DSP-containing desmosome precursors in the cytoplasm during desmosome assembly. Also regulates the accumulation of CDH1 to mature desmosome junctions, via cAMP-dependent signaling and its interaction with activated RAP1A. Positively regulates the stabilization of PKP2 mRNA and therefore protein abundance, via its interaction with FXR1, may also regulate the protein abundance of DSP via the same mechanism. May also regulate the protein abundance of the desmosome component PKP1. Required for the organization of desmosome junctions at intercellular borders between basal keratinocytes of the epidermis, as a result plays a role in maintenance of the dermal barrier and regulation of the dermal inflammatory response. Required during epidermal keratinocyte differentiation for cell adherence at tricellular cell-cell contacts, via regulation of the timely formation of adherens junctions and desmosomes in a calcium-dependent manner, and may also play a role in the organization of the intracellular actin fiber belt. Acts as a negative regulator of the inflammatory response in hematopoietic cells of the skin and intestine, via modulation of proinflammatory cytokine production. Important for epithelial barrier maintenance in the intestine to reduce intestinal permeability, thereby plays a role in protection from intestinal-derived endotoxemia. Required for the development of hair follicles, via a role in the regulation of inner root sheaf length, correct alignment and anterior-posterior polarity of hair follicles. Promotes proliferation and cell-cycle G1/S phase transition of keratinocytes. Promotes E2F1-driven transcription of G1/S phase promoting genes by acting to release E2F1 from its inhibitory interaction with RB1, via sequestering RB1 and CDKN1A to the cytoplasm and thereby increasing CDK4- and CDK6-driven phosphorylation of RB1. May act as a scaffold protein to facilitate MAPK phosphorylation of RPS6KA protein family members and subsequently promote downstream EGFR signaling. May play a role in the positive regulation of transcription of Wnt-mediated TCF-responsive target genes. The sequence is that of Plakophilin-3 (PKP3) from Homo sapiens (Human).